The following is a 145-amino-acid chain: 3-hydroxyacyl-[acyl-carrier-protein] dehydratase FabZ (145 aa).

H47 is a catalytic residue.

The protein belongs to the thioester dehydratase family. FabZ subfamily.

It localises to the cytoplasm. The catalysed reaction is a (3R)-hydroxyacyl-[ACP] = a (2E)-enoyl-[ACP] + H2O. Involved in unsaturated fatty acids biosynthesis. Catalyzes the dehydration of short chain beta-hydroxyacyl-ACPs and long chain saturated and unsaturated beta-hydroxyacyl-ACPs. The polypeptide is 3-hydroxyacyl-[acyl-carrier-protein] dehydratase FabZ (Geotalea uraniireducens (strain Rf4) (Geobacter uraniireducens)).